The sequence spans 257 residues: Global transcriptional regulator CodY (257 aa).

The interval 1-155 (MSLLSKTREL…AATVIGMEIL (155 aa)) is GAF domain. Residues 203–222 (ASKVADGVGITRSVIVNALR) constitute a DNA-binding region (H-T-H motif).

Belongs to the CodY family.

It is found in the cytoplasm. DNA-binding global transcriptional regulator which is involved in the adaptive response to starvation and acts by directly or indirectly controlling the expression of numerous genes in response to nutrient availability. During rapid exponential growth, CodY is highly active and represses genes whose products allow adaptation to nutrient depletion. The chain is Global transcriptional regulator CodY from Staphylococcus aureus (strain bovine RF122 / ET3-1).